A 251-amino-acid chain; its full sequence is Imidazole glycerol phosphate synthase subunit HisF (251 aa).

Residues Asp-11 and Asp-130 contribute to the active site.

The protein belongs to the HisA/HisF family. Heterodimer of HisH and HisF.

It localises to the cytoplasm. It catalyses the reaction 5-[(5-phospho-1-deoxy-D-ribulos-1-ylimino)methylamino]-1-(5-phospho-beta-D-ribosyl)imidazole-4-carboxamide + L-glutamine = D-erythro-1-(imidazol-4-yl)glycerol 3-phosphate + 5-amino-1-(5-phospho-beta-D-ribosyl)imidazole-4-carboxamide + L-glutamate + H(+). The protein operates within amino-acid biosynthesis; L-histidine biosynthesis; L-histidine from 5-phospho-alpha-D-ribose 1-diphosphate: step 5/9. In terms of biological role, IGPS catalyzes the conversion of PRFAR and glutamine to IGP, AICAR and glutamate. The HisF subunit catalyzes the cyclization activity that produces IGP and AICAR from PRFAR using the ammonia provided by the HisH subunit. The chain is Imidazole glycerol phosphate synthase subunit HisF from Thiobacillus denitrificans (strain ATCC 25259 / T1).